Consider the following 1040-residue polypeptide: MQVLPPSSTGGPSRLFIMRPVATTLLMVAILLAGIIGYRALPVSALPEVDYPTIQVVTLYPGASPDVMTSAVTAPLERQFGQMSGLKQMSSQSSGGASVITLQFQLTLPLDVAEQEVQAAINAATNLLPSDLPNPPVYSKVNPADPPIMTLAVTSIAMPMTQVEDMVETRVAQKISQISGVGLVTLSGGQRPAVRVKLNAQAIAALGLTSETVRTAITGANVNSAKGSLDGPSRAVTLSANDQMQSAEEYRQLIIAYQNGAPIRLGDVATVEQGAENSWLGAWANKEQAIVMNVQRQPGANIISTADSIRQMLPQLTESLPKSVKVTVLSDRTTNIRASVDDTQFELMMAIALVVMIIYLFLRNIPATIIPGVAVPLSLIGTFAVMVFLDFSINNLTLMALTIATGFVVDDAIVVIENISRYIEKGEKPLAAALKGAGEIGFTIISLTFSLIAVLIPLLFMGDIVGRLFREFAITLAVAILISAVVSLTLTPMMCARMLSQESLRKQNRFSRASEKMFDRIIAAYGRGLAKVLNHPWLTLSVALSTLLLSVLLWVFIPKGFFPVQDNGIIQGTLQAPQSSSFANMAQRQRQVADVILQDPAVQSLTSFVGVDGTNPSLNSARLQINLKPLDERDDRVQKVIARLQTAVDKVPGVDLFLQPTQDLTIDTQVSRTQYQFTLQATSLDALSTWVPQLMEKLQQLPQLSDVSSDWQDKGLVAYVNVDRDSASRLGISMADVDNALYNAFGQRLISTIYTQANQYRVVLEHNTENTPGLAALDTIRLTSSDGGVVPLSSIAKIEQRFAPLSINHLDQFPVTTISFNVPDNYSLGDAVQAIMDTEKTLNLPVDITTQFQGSTLAFQSALGSTVWLIVAAVVAMYIVLGILYESFIHPITILSTLPTAGVGALLALLIAGSELDVIAIIGIILLIGIVKKNAIMMIDFALAAEREQGMSPREAIYQACLLRFRPILMTTLAALLGALPLMLSTGVGAELRRPLGIGMVGGLIVSQVLTLFTTPVIYLLFDRLALWTKSRFARHEEEA.

The next 12 membrane-spanning stretches (helical) occupy residues 16-36, 347-367, 369-389, 396-416, 440-460, 472-492, 537-557, 863-883, 888-908, 911-931, 968-988, and 998-1018; these read FIMR…AGII, LMMA…NIPA, IIPG…MVFL, LTLM…IVVI, IGFT…PLLF, FAIT…TLTP, WLTL…WVFI, LGST…VLGI, FIHP…ALLA, IAGS…IGIV, ILMT…STGV, and IGMV…TPVI.

This sequence belongs to the resistance-nodulation-cell division (RND) (TC 2.A.6) family. MdtB subfamily. Part of a tripartite efflux system composed of MdtA, MdtB and MdtC. MdtB forms a heteromultimer with MdtC.

The protein resides in the cell inner membrane. The MdtABC tripartite complex confers resistance against novobiocin and deoxycholate. The polypeptide is Multidrug resistance protein MdtB (Escherichia coli O9:H4 (strain HS)).